A 469-amino-acid chain; its full sequence is MSEQLSEHISVQTAQMAQVLVKIVNDKYQWIEERKAKQPLASFHPLLTRSERDFYQALSGDNTVFILECKKASPSKGLIREEFDLDYIASVYGEYASAISVLTDEKYFQGRFEFLPQVRAQVAQPVLCKDFMVDPYQVYLARHYQADAILLMLSVLNDDQYRELAAVAHDLGMGVLTEVSNEQELKRAVDLQAKVIGINNRNLRDLTTDLNRTKQLAPLIPQGTIIISESGIYTHQQVRDLAEFANGFLIGSSLMAQSNLELAVRKIVLGEHKVCGLTHPDDAVKAYQAGSVFGGLIFVEKSKRFVDVEQARLTMSGAPLQYVGVFQNHPAAQVADIATKLGLFAVQLHGEEDSAYVSELRASLPESIEIWKAYGVSDALPELLPEHIDRHLLDAKVGEQSGGTGRSFDWRLLPKHSDLMLAGGLSAENVAQAAQLGCRGLDFNSGVESAPGKKDANQLQQVFQQLRNY.

An indole-3-glycerol phosphate synthase region spans residues 1 to 271 (MSEQLSEHIS…LAVRKIVLGE (271 aa)). Residues 272–469 (HKVCGLTHPD…QQVFQQLRNY (198 aa)) form an N-(5'-phosphoribosyl)anthranilate isomerase region.

It in the N-terminal section; belongs to the TrpC family. In the C-terminal section; belongs to the TrpF family. In terms of assembly, monomer.

It carries out the reaction N-(5-phospho-beta-D-ribosyl)anthranilate = 1-(2-carboxyphenylamino)-1-deoxy-D-ribulose 5-phosphate. It catalyses the reaction 1-(2-carboxyphenylamino)-1-deoxy-D-ribulose 5-phosphate + H(+) = (1S,2R)-1-C-(indol-3-yl)glycerol 3-phosphate + CO2 + H2O. The protein operates within amino-acid biosynthesis; L-tryptophan biosynthesis; L-tryptophan from chorismate: step 3/5. Its pathway is amino-acid biosynthesis; L-tryptophan biosynthesis; L-tryptophan from chorismate: step 4/5. Functionally, bifunctional enzyme that catalyzes two sequential steps of tryptophan biosynthetic pathway. The first reaction is catalyzed by the isomerase, coded by the TrpF domain; the second reaction is catalyzed by the synthase, coded by the TrpC domain. In Vibrio cholerae serotype O1 (strain ATCC 39315 / El Tor Inaba N16961), this protein is Tryptophan biosynthesis protein TrpCF (trpCF).